A 627-amino-acid polypeptide reads, in one-letter code: tRNA uridine 5-carboxymethylaminomethyl modification enzyme MnmG (627 aa).

FAD-binding positions include 13 to 18 (GGGHAG), Val-125, and Ser-180. 274-288 (GPRYCPSIEDKVVRF) is a binding site for NAD(+). Gln-371 contacts FAD.

The protein belongs to the MnmG family. Homodimer. Heterotetramer of two MnmE and two MnmG subunits. The cofactor is FAD.

The protein localises to the cytoplasm. In terms of biological role, NAD-binding protein involved in the addition of a carboxymethylaminomethyl (cmnm) group at the wobble position (U34) of certain tRNAs, forming tRNA-cmnm(5)s(2)U34. The polypeptide is tRNA uridine 5-carboxymethylaminomethyl modification enzyme MnmG (Francisella tularensis subsp. tularensis (strain FSC 198)).